The primary structure comprises 438 residues: Glutamyl-tRNA(Gln) amidotransferase subunit D (438 aa).

Positions 92-422 (PDVTIIGTGG…EEVRRMMLTN (331 aa)) constitute an Asparaginase/glutaminase domain. Catalysis depends on residues Thr102, Thr178, Asp179, and Lys256.

Belongs to the asparaginase 1 family. GatD subfamily. In terms of assembly, heterodimer of GatD and GatE.

It carries out the reaction L-glutamyl-tRNA(Gln) + L-glutamine + ATP + H2O = L-glutaminyl-tRNA(Gln) + L-glutamate + ADP + phosphate + H(+). In terms of biological role, allows the formation of correctly charged Gln-tRNA(Gln) through the transamidation of misacylated Glu-tRNA(Gln) in organisms which lack glutaminyl-tRNA synthetase. The reaction takes place in the presence of glutamine and ATP through an activated gamma-phospho-Glu-tRNA(Gln). The GatDE system is specific for glutamate and does not act on aspartate. The sequence is that of Glutamyl-tRNA(Gln) amidotransferase subunit D from Pyrococcus horikoshii (strain ATCC 700860 / DSM 12428 / JCM 9974 / NBRC 100139 / OT-3).